A 606-amino-acid polypeptide reads, in one-letter code: NADH-ubiquinone oxidoreductase chain 5 (606 aa).

Helical transmembrane passes span 1 to 21, 43 to 63, 87 to 107, 117 to 137, 140 to 160, 171 to 191, 201 to 221, 241 to 261, 273 to 293, 310 to 330, 365 to 385, 409 to 429, 457 to 477, 488 to 508, and 582 to 602; these read MNMFSSCMITALVILTLPIIM, AFMISMIPTMMFIYSGQETIF, MIFVPVALFVTWSIMEFSMWY, FFKYLLLFLITMMVLVTANNM, LFIGWEGVGIMSFLLIGWWYG, AVLYNRIGDVGFIMTMAWFLL, IFITTNDNFNLPLLGLLLAAT, TPVSALLHSSTMVVAGVFLLI, IQTLTLCLGAITTLFTAICAL, LGLMMVTIGINQPYLAFLHIC, VLPFTTTSLIIGSLALTGMPF, LLITLVATSLTAAYSTRIMFF, LLIGSVFAGYIISHSITPTTI, MTALAVTILGFILALELNLTT, and GLIKLYFLSFMLTMILSLLIL.

It belongs to the complex I subunit 5 family. In terms of assembly, core subunit of respiratory chain NADH dehydrogenase (Complex I) which is composed of 45 different subunits.

It localises to the mitochondrion inner membrane. It catalyses the reaction a ubiquinone + NADH + 5 H(+)(in) = a ubiquinol + NAD(+) + 4 H(+)(out). Core subunit of the mitochondrial membrane respiratory chain NADH dehydrogenase (Complex I) which catalyzes electron transfer from NADH through the respiratory chain, using ubiquinone as an electron acceptor. Essential for the catalytic activity and assembly of complex I. The polypeptide is NADH-ubiquinone oxidoreductase chain 5 (MT-ND5) (Canis lupus familiaris (Dog)).